The primary structure comprises 207 residues: MKTKILSLANEEVGEISLNEDIFAVEFIRDDIIKQVIDWQRAKAMSGNHKTKTVSEVSGTTKKPFKQKGTGNARQGSLRSVQMRGGGVAHGPRVRSHATKLPKKVRKLGLIHALSEKFAEGKLLVIDSLKLDKPKTSVLVNILNKFQGKSFFVIDGNEVDTNFSLAAKNIYNTVIVPQIGANVYDIIRHEYVLLSQEAVSVLEERLR.

Positions 50–75 are disordered; the sequence is KTKTVSEVSGTTKKPFKQKGTGNARQ.

The protein belongs to the universal ribosomal protein uL4 family. In terms of assembly, part of the 50S ribosomal subunit.

One of the primary rRNA binding proteins, this protein initially binds near the 5'-end of the 23S rRNA. It is important during the early stages of 50S assembly. It makes multiple contacts with different domains of the 23S rRNA in the assembled 50S subunit and ribosome. Functionally, forms part of the polypeptide exit tunnel. This chain is Large ribosomal subunit protein uL4, found in Rickettsia felis (strain ATCC VR-1525 / URRWXCal2) (Rickettsia azadi).